We begin with the raw amino-acid sequence, 315 residues long: Leukocidin-S subunit (315 aa).

The first 29 residues, Met-1 to Ala-29, serve as a signal peptide directing secretion.

It belongs to the aerolysin family. As to quaternary structure, leukocidin consists of two protein components: F and S.

Its function is as follows. Leukocidin causes cytotoxic changes in polymorphonuclear leukocytes. This is Leukocidin-S subunit (lukS) from Staphylococcus aureus.